Reading from the N-terminus, the 572-residue chain is Pentatricopeptide repeat-containing protein At1g26900, mitochondrial (572 aa).

The N-terminal 117 residues, 1–117 (MTLAITSRLR…RAFSVFNQLR (117 aa)), are a transit peptide targeting the mitochondrion. PPR repeat units follow at residues 89–123 (NLFM…GLTL), 124–158 (DRFS…GFMV), 159–189 (FTDL…MPQS), 191–225 (DAVT…EVVV), 226–260 (NVST…GLDL), 261–291 (DLHL…AIRK), 292–326 (DVVT…KMKP), 327–361 (NSST…RIAL), 362–392 (DAIL…MKDK), 393–427 (DVKS…NCKV), 430–460 (NEIT…MVEA), and 466–496 (KVEH…LPIT). Positions 501–572 (AWRALLAACR…EAGYSAIEIE (72 aa)) are type E motif.

Belongs to the PPR family. PCMP-E subfamily.

The protein resides in the mitochondrion. This chain is Pentatricopeptide repeat-containing protein At1g26900, mitochondrial (PCMP-E54), found in Arabidopsis thaliana (Mouse-ear cress).